A 367-amino-acid polypeptide reads, in one-letter code: 4-hydroxyphenylpyruvate dioxygenase (367 aa).

VOC domains follow at residues 3–135 (GFDH…FVDR) and 166–324 (LIDH…IFTN). Residues H169, H252, and E335 each coordinate Fe cation.

This sequence belongs to the 4HPPD family. The cofactor is Fe cation.

It catalyses the reaction 3-(4-hydroxyphenyl)pyruvate + O2 = homogentisate + CO2. The protein operates within amino-acid degradation; L-phenylalanine degradation; acetoacetate and fumarate from L-phenylalanine: step 3/6. Functionally, key enzyme in the degradation of tyrosine. This chain is 4-hydroxyphenylpyruvate dioxygenase (hpd), found in Dictyostelium discoideum (Social amoeba).